Here is a 327-residue protein sequence, read N- to C-terminus: Serine/threonine-protein phosphatase PP2A catalytic subunit (327 aa).

Mn(2+)-binding residues include aspartate 75, histidine 77, aspartate 103, and asparagine 135. Histidine 136 serves as the catalytic Proton donor. 2 residues coordinate Mn(2+): histidine 185 and histidine 259. The residue at position 327 (leucine 327) is a Leucine methyl ester.

Belongs to the PPP phosphatase family. PP-2A subfamily. Requires Mn(2+) as cofactor.

The catalysed reaction is O-phospho-L-seryl-[protein] + H2O = L-seryl-[protein] + phosphate. It catalyses the reaction O-phospho-L-threonyl-[protein] + H2O = L-threonyl-[protein] + phosphate. The protein is Serine/threonine-protein phosphatase PP2A catalytic subunit (pph-1) of Neurospora crassa (strain ATCC 24698 / 74-OR23-1A / CBS 708.71 / DSM 1257 / FGSC 987).